A 102-amino-acid chain; its full sequence is uncharacterized protein (102 aa).

The segment covering P1–S13 has biased composition (low complexity). Positions P1 to V24 are disordered.

This is an uncharacterized protein from Human cytomegalovirus (strain AD169) (HHV-5).